Reading from the N-terminus, the 408-residue chain is Neutral cholesterol ester hydrolase 1 (408 aa).

The Cytoplasmic portion of the chain corresponds to 1–4 (MRSS). Residues 5 to 25 (CVLLTALLALAAYYIYIPLPS) form a helical; Signal-anchor for type II membrane protein membrane-spanning segment. The Lumenal portion of the chain corresponds to 26–408 (SVSDPWKLML…SYIKWLDQNL (383 aa)). The Involved in the stabilization of the negatively charged intermediate by the formation of the oxyanion hole motif lies at 113-115 (HGG). Residue S191 is part of the active site. 2 N-linked (GlcNAc...) asparagine glycosylation sites follow: N270 and N287. Active-site residues include D348 and H378. An N-linked (GlcNAc...) asparagine glycan is attached at N389.

Belongs to the 'GDXG' lipolytic enzyme family. Post-translationally, N-glycosylated.

The protein localises to the cell membrane. It is found in the microsome. The catalysed reaction is a 1-O-alkyl-2-acetyl-sn-glycerol + H2O = a 1-O-alkyl-sn-glycerol + acetate + H(+). It catalyses the reaction 1-O-hexadecyl-2-acetyl-sn-glycerol + H2O = 1-O-hexadecyl-sn-glycerol + acetate + H(+). The enzyme catalyses a cholesterol ester + H2O = cholesterol + a fatty acid + H(+). It carries out the reaction cholesteryl (9Z-octadecenoate) + H2O = cholesterol + (9Z)-octadecenoate + H(+). Functionally, hydrolyzes 2-acetyl monoalkylglycerol ether (1-O-alkyl-2-acetyl-sn-glycerol), the penultimate precursor of the pathway for de novo synthesis of platelet-activating factor. May be responsible for the hydrolysis of cholesterol esters (such as cholesteryl (9Z-octadecenoate)) in macrophages. Also involved in organ detoxification by hydrolyzing exogenous organophosphorus compounds. The polypeptide is Neutral cholesterol ester hydrolase 1 (NCEH1) (Bos taurus (Bovine)).